The chain runs to 309 residues: Protein-L-isoaspartate O-methyltransferase 2 (309 aa).

A Nuclear localization signal motif is present at residues K23–K28. S144 is a catalytic residue.

Belongs to the methyltransferase superfamily. L-isoaspartyl/D-aspartyl protein methyltransferase family. As to expression, expressed in rosette leaves, stems, cauline leaves, flowers and developing seeds.

The protein resides in the nucleus. It catalyses the reaction [protein]-L-isoaspartate + S-adenosyl-L-methionine = [protein]-L-isoaspartate alpha-methyl ester + S-adenosyl-L-homocysteine. In terms of biological role, catalyzes the methyl esterification of L-isoaspartyl residues in peptides and proteins that result from spontaneous decomposition of normal L-aspartyl and L-asparaginyl residues. It plays a role in the repair and/or degradation of damaged proteins. This chain is Protein-L-isoaspartate O-methyltransferase 2 (PIMT2), found in Arabidopsis thaliana (Mouse-ear cress).